The primary structure comprises 406 residues: Nodal homolog (406 aa).

An N-terminal signal peptide occupies residues 1–18 (MAFLTAVLYLGFACISQG). Residues 19-281 (LPTWPDRVES…RVPGIRRHRR (263 aa)) constitute a propeptide that is removed on maturation. N-linked (GlcNAc...) asparagine glycans are attached at residues Asn71, Asn136, and Asn172. The segment at 195–222 (KERAERGSGMSNAEFIDAPGPSQQYNPH) is disordered. 3 disulfides stabilise this stretch: Cys306/Cys372, Cys335/Cys403, and Cys339/Cys405. N-linked (GlcNAc...) asparagine glycosylation occurs at Asn344.

Belongs to the TGF-beta family. In terms of assembly, homodimer; disulfide-linked. Interacts with, and is inhibited by cer1 and gdf10/bmp3b. In terms of tissue distribution, in the first phase of expression, localized to the vegetal region of the blastula. During gastrulation (stage 10.5), this expression disappears and instead becomes localized to the dorsal marginal zone, with enrichment in the organizer. During the second phase of expression in neurulae and tailbud embryos, expression restarts firstly in two symmetric patches near the posterior end of the notochord, and then in a large asymmetrical domain in the left lateral plate mesoderm.

Its subcellular location is the secreted. Its function is as follows. Cooperation and regulatory loops of multiple nodals are essential for mesendoderm patterning in early embryos. Essential for mesoderm formation and axial patterning during embryonic development. Activates the activin-like signaling pathway to induce dorsal and ventral mesoderm in animal cap ectoderm. In addition, also dorsalizes ventral marginal zone (VMZ) tissues during gastrulation. Acts in a downstream signaling cascade via cripto and cer1 to mediate cardiogenesis in embryonic mesoderm. Directs the orientation of the left-right axis by driving the left-specific gene cascade in the left lateral plate mesoderm. This is Nodal homolog from Xenopus laevis (African clawed frog).